The following is a 714-amino-acid chain: Rho-GTPase-activating protein RGD2 (714 aa).

An F-BAR domain is found at 2-441 (LSFCDYFWSE…LENDIDPTAD (440 aa)). The 81-residue stretch at 218–298 (PKTDYKLPLI…WKNTAYMFAN (81 aa)) folds into the DEP domain. Residues 475–704 (VDLETRCRLD…DLLTHKKQIF (230 aa)) enclose the Rho-GAP domain.

Interacts with CDC42 and RHO5.

In terms of biological role, acts in signal transduction. Activates CDC42 and RHO5. This is Rho-GTPase-activating protein RGD2 (RGD2) from Saccharomyces cerevisiae (strain ATCC 204508 / S288c) (Baker's yeast).